An 87-amino-acid polypeptide reads, in one-letter code: Phosphoribosyl-ATP pyrophosphatase (87 aa).

The protein belongs to the PRA-PH family.

The protein resides in the cytoplasm. The enzyme catalyses 1-(5-phospho-beta-D-ribosyl)-ATP + H2O = 1-(5-phospho-beta-D-ribosyl)-5'-AMP + diphosphate + H(+). It participates in amino-acid biosynthesis; L-histidine biosynthesis; L-histidine from 5-phospho-alpha-D-ribose 1-diphosphate: step 2/9. This is Phosphoribosyl-ATP pyrophosphatase from Thermobifida fusca (strain YX).